A 352-amino-acid polypeptide reads, in one-letter code: Cell division protein ZipA (352 aa).

At 1–6 the chain is on the periplasmic side; that stretch reads MKDLQL. The chain crosses the membrane as a helical span at residues 7–27; the sequence is VLFVLGAIAIIAVLVHGFWSI. Residues 28–352 lie on the Cytoplasmic side of the membrane; the sequence is RKQQPKSMKQ…KDYLRRLNAA (325 aa). 2 disordered regions span residues 78–120 and 138–160; these read KPVL…HVEP and PAPT…TSTA. Positions 83–105 are enriched in polar residues; it reads TNLSQKPHSGTTKLTDTPLQDSL. The segment covering 111–120 has biased composition (basic and acidic residues); sequence HKTEPEHVEP. Residues 141–160 are compositionally biased toward polar residues; it reads TASTSMNTPKKIFNPSTSTA.

The protein belongs to the ZipA family. Interacts with FtsZ via their C-terminal domains.

The protein localises to the cell inner membrane. Functionally, essential cell division protein that stabilizes the FtsZ protofilaments by cross-linking them and that serves as a cytoplasmic membrane anchor for the Z ring. Also required for the recruitment to the septal ring of downstream cell division proteins. The sequence is that of Cell division protein ZipA from Shewanella frigidimarina (strain NCIMB 400).